The sequence spans 462 residues: L-seryl-tRNA(Sec) selenium transferase (462 aa).

Lysine 294 bears the N6-(pyridoxal phosphate)lysine mark.

This sequence belongs to the SelA family. As to quaternary structure, homodecamer; pentamer of dimers. Binds only one seryl-tRNA(Sec) per dimer. It depends on pyridoxal 5'-phosphate as a cofactor.

Its subcellular location is the cytoplasm. It carries out the reaction L-seryl-tRNA(Sec) + selenophosphate + H(+) = L-selenocysteinyl-tRNA(Sec) + phosphate. It functions in the pathway aminoacyl-tRNA biosynthesis; selenocysteinyl-tRNA(Sec) biosynthesis; selenocysteinyl-tRNA(Sec) from L-seryl-tRNA(Sec) (bacterial route): step 1/1. Functionally, converts seryl-tRNA(Sec) to selenocysteinyl-tRNA(Sec) required for selenoprotein biosynthesis. This is L-seryl-tRNA(Sec) selenium transferase from Yersinia enterocolitica serotype O:8 / biotype 1B (strain NCTC 13174 / 8081).